The primary structure comprises 98 residues: Integration host factor subunit beta (98 aa).

The protein belongs to the bacterial histone-like protein family. Heterodimer of an alpha and a beta chain.

In terms of biological role, this protein is one of the two subunits of integration host factor, a specific DNA-binding protein that functions in genetic recombination as well as in transcriptional and translational control. The protein is Integration host factor subunit beta of Pseudomonas putida (strain W619).